The following is a 294-amino-acid chain: 2-oxo-3-(phosphooxy)propyl 3-oxoalkanoate synthase (294 aa).

Belongs to the AfsA family.

The enzyme catalyses a medium-chain 3-oxoacyl-[ACP] + dihydroxyacetone phosphate = a (4-alkanoyl-5-oxo-2,5-dihydrofuran-3-yl)methyl phosphate + holo-[ACP] + H2O. Involved in the biosynthesis of virginiae butanolide (VB), a gamma-butyrolactone autoregulator that triggers the production of the streptogramin antibiotic virginiamycin. The polypeptide is 2-oxo-3-(phosphooxy)propyl 3-oxoalkanoate synthase (Streptomyces virginiae (Streptomyces cinnamonensis)).